Here is a 200-residue protein sequence, read N- to C-terminus: Ephrin-A2 (200 aa).

An N-terminal signal peptide occupies residues Met-1–Asp-22. The region spanning Ser-28–Asn-161 is the Ephrin RBD domain. A glycan (N-linked (GlcNAc...) asparagine) is linked at Asn-36. 2 cysteine pairs are disulfide-bonded: Cys-61-Cys-101 and Cys-89-Cys-150. N-linked (GlcNAc...) asparagine glycans are attached at residues Asn-161 and Asn-175. Asn-175 carries the GPI-anchor amidated asparagine lipid modification. Positions Asn-176 to Ser-200 are cleaved as a propeptide — removed in mature form.

Belongs to the ephrin family. In terms of assembly, binds to the receptor tyrosine kinases EPHA3, EPHA4 and EPHA5. Interacts with EPHA8; activates EPHA8. In terms of tissue distribution, expressed in a gradient across the tectum being more strongly expressed at the posterior pole.

The protein localises to the cell membrane. Functionally, cell surface GPI-bound ligand for Eph receptors, a family of receptor tyrosine kinases which are crucial for migration, repulsion and adhesion during neuronal, vascular and epithelial development. Binds promiscuously Eph receptors residing on adjacent cells, leading to contact-dependent bidirectional signaling into neighboring cells. The signaling pathway downstream of the receptor is referred to as forward signaling while the signaling pathway downstream of the ephrin ligand is referred to as reverse signaling. With the EPHA2 receptor may play a role in bone remodeling through regulation of osteoclastogenesis and osteoblastogenesis. In Gallus gallus (Chicken), this protein is Ephrin-A2 (EFNA2).